The primary structure comprises 387 residues: Exodeoxyribonuclease 7 large subunit (387 aa).

It belongs to the XseA family. Heterooligomer composed of large and small subunits.

It localises to the cytoplasm. It catalyses the reaction Exonucleolytic cleavage in either 5'- to 3'- or 3'- to 5'-direction to yield nucleoside 5'-phosphates.. Bidirectionally degrades single-stranded DNA into large acid-insoluble oligonucleotides, which are then degraded further into small acid-soluble oligonucleotides. This Campylobacter jejuni (strain RM1221) protein is Exodeoxyribonuclease 7 large subunit.